Reading from the N-terminus, the 133-residue chain is Small ribosomal subunit protein uS8 (133 aa).

This sequence belongs to the universal ribosomal protein uS8 family. As to quaternary structure, part of the 30S ribosomal subunit. Contacts proteins S5 and S12.

One of the primary rRNA binding proteins, it binds directly to 16S rRNA central domain where it helps coordinate assembly of the platform of the 30S subunit. The chain is Small ribosomal subunit protein uS8 from Chloroflexus aurantiacus (strain ATCC 29364 / DSM 637 / Y-400-fl).